The chain runs to 171 residues: Lipoprotein signal peptidase (171 aa).

A run of 3 helical transmembrane segments spans residues Trp12–Ala32, Trp67–Leu87, and Ser93–Val113. Residues Asp123 and Asp141 contribute to the active site. Residues Phe137–Leu157 traverse the membrane as a helical segment.

Belongs to the peptidase A8 family.

The protein resides in the cell inner membrane. It catalyses the reaction Release of signal peptides from bacterial membrane prolipoproteins. Hydrolyzes -Xaa-Yaa-Zaa-|-(S,diacylglyceryl)Cys-, in which Xaa is hydrophobic (preferably Leu), and Yaa (Ala or Ser) and Zaa (Gly or Ala) have small, neutral side chains.. It functions in the pathway protein modification; lipoprotein biosynthesis (signal peptide cleavage). In terms of biological role, this protein specifically catalyzes the removal of signal peptides from prolipoproteins. In Shewanella baltica (strain OS195), this protein is Lipoprotein signal peptidase.